Reading from the N-terminus, the 228-residue chain is MPAFFVTGTDTEIGKTTIAAGLLHAARSAGLSTAAAKPVASGCEPTAQGLRNGDALVLLGQCSLALAYEQVNPLAFAPAIAPHLAAREAGVELSAARLHEAVREVLALQADFTLVEGAGGWRVPLLGRENLSDLARLLALPVVLVVGVRLGCINHALLSAEAILGDGLALAGWVANVVDPATSRLEENLATLAERLPAPCLGRVPRLEEATPAAVAAHLDLRPLGIGL.

12 to 17 (EIGKTT) is a binding site for ATP. Mg(2+) is bound at residue T16. Residue K37 is part of the active site. S41 contacts substrate. Residues D54, 116–119 (EGAG), and 205–207 (PRL) each bind ATP. Mg(2+)-binding residues include D54 and E116.

It belongs to the dethiobiotin synthetase family. Homodimer. The cofactor is Mg(2+).

It localises to the cytoplasm. It carries out the reaction (7R,8S)-7,8-diammoniononanoate + CO2 + ATP = (4R,5S)-dethiobiotin + ADP + phosphate + 3 H(+). It functions in the pathway cofactor biosynthesis; biotin biosynthesis; biotin from 7,8-diaminononanoate: step 1/2. Catalyzes a mechanistically unusual reaction, the ATP-dependent insertion of CO2 between the N7 and N8 nitrogen atoms of 7,8-diaminopelargonic acid (DAPA, also called 7,8-diammoniononanoate) to form a ureido ring. This Pseudomonas aeruginosa (strain ATCC 15692 / DSM 22644 / CIP 104116 / JCM 14847 / LMG 12228 / 1C / PRS 101 / PAO1) protein is ATP-dependent dethiobiotin synthetase BioD.